We begin with the raw amino-acid sequence, 161 residues long: UPF0225 protein NTHI0386 (161 aa).

The protein belongs to the UPF0225 family.

This is UPF0225 protein NTHI0386 from Haemophilus influenzae (strain 86-028NP).